Here is a 135-residue protein sequence, read N- to C-terminus: uncharacterized protein (135 aa).

This is an uncharacterized protein from Acanthamoeba polyphaga (Amoeba).